Consider the following 514-residue polypeptide: Na(+)/H(+) antiporter NhaB (514 aa).

Transmembrane regions (helical) follow at residues 21–41 (LAIVVFLIINPIVFFFISPFI), 43–63 (GWLLVAEFIFTLAMALKCYPL), 88–108 (IMANFEVILLLIFMVAGIFFM), 143–163 (FLDALTVVAVIISVAMGFYGV), 203–223 (LMMHAGVGTALGGVMTVVGEP), 239–259 (FFLRMAPVTIPVFICGLLTCF), 304–324 (ALIAIWLIVGLAFHLAAVGLI), 349–369 (QESLPFTALLVVFFSVVAVII), 390–410 (LALFYLFNGLLSSISDNVFVA), 448–468 (ATPNGQAAFLFLLTSSISPLI), and 484–504 (IVLSIIGLLAIEFILPAATIW).

It belongs to the NhaB Na(+)/H(+) (TC 2.A.34) antiporter family.

It is found in the cell inner membrane. The catalysed reaction is 2 Na(+)(in) + 3 H(+)(out) = 2 Na(+)(out) + 3 H(+)(in). Na(+)/H(+) antiporter that extrudes sodium in exchange for external protons. This is Na(+)/H(+) antiporter NhaB from Haemophilus influenzae (strain ATCC 51907 / DSM 11121 / KW20 / Rd).